A 344-amino-acid polypeptide reads, in one-letter code: Endoplasmic reticulum junction formation protein lunapark-1 (344 aa).

Topologically, residues 1–39 (MGNLFSRTKSPATELERVVLSIEDFKKRLQTISASNSST) are cytoplasmic. A helical membrane pass occupies residues 40–60 (LYYYYMGVIIILSIAMAHTWL). The Lumenal portion of the chain corresponds to 61–68 (RFDDPTKT). Residues 69-89 (YVACALVFGATVIVLTGRYII) form a helical membrane-spanning segment. At 90–344 (NCFFAWRTNR…ADETAVVEKS (255 aa)) the chain is on the cytoplasmic side. A coiled-coil region spans residues 116–140 (DLVKETLKFKEAKEILDRYEEKTEA). Disordered regions lie at residues 136 to 155 (EKTE…HQQK) and 171 to 192 (QKRV…IAFD). The span at 140-155 (AGNTPTENSKLIHQQK) shows a compositional bias: polar residues. A C4-type; plays a role in ER morphology zinc finger spans residues 239 to 264 (CSICHTHNGMSVPAEYPFISFRCFEC). Positions 275-344 (PHLPITRPPM…ADETAVVEKS (70 aa)) are disordered. A compositionally biased stretch (polar residues) spans 312–326 (PNPSTDLTPSASQHG). Over residues 327-344 (SDSEPEKNADETAVVEKS) the composition is skewed to basic and acidic residues.

This sequence belongs to the lunapark family.

It is found in the endoplasmic reticulum membrane. Plays a role in tubular endoplasmic reticulum network formation and maintenance. May be involved in central nervous system development. Has a presynaptic role in neurotransmission. Likely to operate in synaptogenesis by regulating vesicular transport or localization. Required for correct localization of rab-3 and snb-1. This is Endoplasmic reticulum junction formation protein lunapark-1 from Caenorhabditis briggsae.